The sequence spans 339 residues: 4-hydroxy-2-oxovalerate aldolase (339 aa).

One can recognise a Pyruvate carboxyltransferase domain in the interval 7–259; it reads VILHDMSLRD…QSGIDLYKIM (253 aa). Position 15 to 16 (15 to 16) interacts with substrate; the sequence is RD. A Mn(2+)-binding site is contributed by Asp16. His19 acts as the Proton acceptor in catalysis. The substrate site is built by Ser169 and His198. Mn(2+) is bound by residues His198 and His200. Tyr289 is a substrate binding site.

Belongs to the 4-hydroxy-2-oxovalerate aldolase family.

It catalyses the reaction (S)-4-hydroxy-2-oxopentanoate = acetaldehyde + pyruvate. The polypeptide is 4-hydroxy-2-oxovalerate aldolase (Marinomonas sp. (strain MWYL1)).